A 197-amino-acid polypeptide reads, in one-letter code: DNA-directed RNA polymerases I, II, and III subunit rpabc1 (197 aa).

It belongs to the archaeal Rpo5/eukaryotic RPB5 RNA polymerase subunit family. Component of the RNA polymerase I (Pol I), RNA polymerase II (Pol II) and RNA polymerase III (Pol III) complexes consisting of at least 13, 12 and 17 subunits, respectively. In RNA Pol II, this subunit is present in 2-fold molar excess over the other subunits.

The protein localises to the nucleus. In terms of biological role, DNA-dependent RNA polymerase catalyzes the transcription of DNA into RNA using the four ribonucleoside triphosphates as substrates. Common component of RNA polymerases I, II and III which synthesize ribosomal RNA precursors, mRNA precursors and many functional non-coding RNAs, and small RNAs, such as 5S rRNA and tRNAs, respectively. Pol II is the central component of the basal RNA polymerase II transcription machinery. Pols are composed of mobile elements that move relative to each other. In Pol II, RPB5 is part of the lower jaw surrounding the central large cleft and thought to grab the incoming DNA template. Seems to be the major component in this process. This is DNA-directed RNA polymerases I, II, and III subunit rpabc1 (polr2e) from Dictyostelium discoideum (Social amoeba).